Here is a 516-residue protein sequence, read N- to C-terminus: Propionyl-CoA carboxylase, carboxyltransferase subunit (516 aa).

Residues 1–32 (MTMEDRIDELREKREEALKGGGEDRIASQHDK) form a disordered region. The CoA carboxyltransferase N-terminal domain occupies 3–259 (MEDRIDELRE…NNVEDPPRVE (257 aa)). The CoA carboxyltransferase C-terminal domain maps to 263–509 (DPERVADELE…KSKRKSQPDK (247 aa)).

It belongs to the AccD/PCCB family. As to quaternary structure, the propionyl coenzyme A carboxylase (PCC) complex is composed of three subunits: PccA (biotin carboxylase and biotin-carboxyl carrier), PccB (carboxyltransferase) and PccX.

The catalysed reaction is propanoyl-CoA + hydrogencarbonate + ATP = (S)-methylmalonyl-CoA + ADP + phosphate + H(+). It participates in metabolic intermediate metabolism; propanoyl-CoA degradation; succinyl-CoA from propanoyl-CoA: step 1/3. Functionally, part of the propionyl coenzyme A carboxylase (PCC) complex involved in propionate utilization and in the production of the poly(3-hydroxybutyrate-co-3-hydroxyvalerate)(PHBV), which is a water-insoluble biopolymer used as intracellular energy reserve material when cells grow under conditions of nutrient limitation. The complex catalyzes the carboxylation of propionyl-CoA to methylmalonyl-CoA. PCC is also able to catalyze the carboxylation of acetyl-CoA. The sequence is that of Propionyl-CoA carboxylase, carboxyltransferase subunit from Haloferax mediterranei (strain ATCC 33500 / DSM 1411 / JCM 8866 / NBRC 14739 / NCIMB 2177 / R-4) (Halobacterium mediterranei).